Reading from the N-terminus, the 250-residue chain is Recombination protein RecR (250 aa).

The C4-type zinc-finger motif lies at 56-71; it reads CRICHNISQEDVCRIC. Residues 79–227 form the Toprim domain; that stretch reads SIICVVEESK…TVTRLASGIP (149 aa). Positions 148–172 are disordered; it reads LGDADTPADGESSGADAAETGNAKT.

Belongs to the RecR family.

Functionally, may play a role in DNA repair. It seems to be involved in an RecBC-independent recombinational process of DNA repair. It may act with RecF and RecO. The chain is Recombination protein RecR from Corynebacterium jeikeium (strain K411).